The primary structure comprises 342 residues: C-X-C chemokine receptor type 6 (342 aa).

The Extracellular segment spans residues 1 to 32 (MAEHDYHEDYGFSSFNDSSQEEHQDFLQFSKV). Asparagine 16 carries N-linked (GlcNAc...) asparagine glycosylation. The chain crosses the membrane as a helical span at residues 33–59 (FLPCMYLVVFVCGLVGNSLVLVISIFY). Residues 60–68 (HKLQSLTDV) lie on the Cytoplasmic side of the membrane. The chain crosses the membrane as a helical span at residues 69–89 (FLVNLPLADLVFVCTLPFWAY). The Extracellular portion of the chain corresponds to 90 to 103 (AGIHEWVFGQVMCK). An intrachain disulfide couples cysteine 102 to cysteine 180. A helical transmembrane segment spans residues 104–125 (SLLGIYTINFYTSMLILTCITV). Topologically, residues 126–143 (DRFIVVVKATKAYNQQAK) are cytoplasmic. The helical transmembrane segment at 144–164 (RMTWGKVTSLLIWVISLLVSL) threads the bilayer. The Extracellular segment spans residues 165–187 (PQIIYGNVFNLDKLICGYHDEAI). The helical transmembrane segment at 188-215 (STVVLATQMTLGFFLPLLTMIVCYSVII) threads the bilayer. Topologically, residues 216-231 (KTLLHAGGFQKHRSLK) are cytoplasmic. Residues 232–259 (IIFLVMAVFLLTQMPFNLMKFIRSTHWE) form a helical membrane-spanning segment. Over 260-275 (YYAMTSFHYTIMVTEA) the chain is Extracellular. Residues 276 to 293 (IAYLRACLNPVLYAFVSL) traverse the membrane as a helical segment. The Cytoplasmic segment spans residues 294 to 342 (KFRKNFWKLVKDIGCLPYLGVSHQWKSSEDNSKTFSASHNVEATSMFQL).

Belongs to the G-protein coupled receptor 1 family. As to expression, expressed in lymphoid tissues and activated T cells.

It is found in the cell membrane. Functionally, receptor for the C-X-C chemokine CXCL16. Used as a coreceptor by SIVs and by strains of HIV-2 and m-tropic HIV-1. This chain is C-X-C chemokine receptor type 6 (CXCR6), found in Homo sapiens (Human).